We begin with the raw amino-acid sequence, 115 residues long: Large ribosomal subunit protein uL22 (115 aa).

The protein belongs to the universal ribosomal protein uL22 family. In terms of assembly, part of the 50S ribosomal subunit.

Its function is as follows. This protein binds specifically to 23S rRNA; its binding is stimulated by other ribosomal proteins, e.g. L4, L17, and L20. It is important during the early stages of 50S assembly. It makes multiple contacts with different domains of the 23S rRNA in the assembled 50S subunit and ribosome. In terms of biological role, the globular domain of the protein is located near the polypeptide exit tunnel on the outside of the subunit, while an extended beta-hairpin is found that lines the wall of the exit tunnel in the center of the 70S ribosome. This is Large ribosomal subunit protein uL22 from Endomicrobium trichonymphae.